A 640-amino-acid polypeptide reads, in one-letter code: Phosphatidylinositol-binding clathrin assembly protein (640 aa).

Serine 2 carries the N-acetylserine modification. Residues 14–145 (QHSVTGSAVS…VSYRQVAFDF (132 aa)) form the ENTH domain. Residues serine 16 and serine 20 each carry the phosphoserine modification. Residues 221-294 (KYFDMKKNQC…LEGKKIKDST (74 aa)) form an interaction with PIMREG region. Lysine 238 is covalently cross-linked (Glycyl lysine isopeptide (Lys-Gly) (interchain with G-Cter in SUMO2)). A phosphoserine mark is found at serine 303 and serine 315. The tract at residues 543 to 568 (NGTTKNDVSCSQPGEKKLTGGSNWQP) is disordered. Over residues 544 to 554 (GTTKNDVSCSQ) the composition is skewed to polar residues.

This sequence belongs to the PICALM/SNAP91 family. Binds to clathrin; involves primarily the C-terminal sequences, but the full-length protein is required for full binding capacity. Binds phosphatidylinositol 4,5- bisphosphate. Interacts with PIMREG; this interaction may change the subcellular location into the nucleus. Interacts with AP2A1 (via its alpha-appendage domain). Interacts (via N-terminus) with VAMP2; VAMP3; VAMP7 and VAMP8 (Via N-terminus). Interacts with LC3/MAP1LC3A. As to expression, isoform 2 was found in most tissues examined. Isoform 1 has an overlapping expression pattern but is absent from lung, heart and pancreas. Both isoforms are widely expressed in the brain, higher levels are seen in hippocampus, dentate gyrus, medial habenula nucleus and cerebellar granule cells.

Its subcellular location is the cell membrane. It is found in the membrane. The protein resides in the clathrin-coated pit. It localises to the golgi apparatus. The protein localises to the cytoplasmic vesicle. Its subcellular location is the clathrin-coated vesicle. It is found in the nucleus. Functionally, cytoplasmic adapter protein that plays a critical role in clathrin-mediated endocytosis which is important in processes such as internalization of cell receptors, synaptic transmission or removal of apoptotic cells. Recruits AP-2 and attaches clathrin triskelions to the cytoplasmic side of plasma membrane leading to clathrin-coated vesicles (CCVs) assembly. Furthermore, regulates clathrin-coated vesicle size and maturation by directly sensing and driving membrane curvature. In addition to binding to clathrin, mediates the endocytosis of small R-SNARES (Soluble NSF Attachment Protein REceptors) between plasma membranes and endosomes including VAMP2, VAMP3, VAMP4, VAMP7 or VAMP8. In turn, PICALM-dependent SNARE endocytosis is required for the formation and maturation of autophagic precursors. Modulates thereby autophagy and the turnover of autophagy substrates such as MAPT/TAU or amyloid precursor protein cleaved C-terminal fragment (APP-CTF). The sequence is that of Phosphatidylinositol-binding clathrin assembly protein (Picalm) from Rattus norvegicus (Rat).